The primary structure comprises 183 residues: ATP synthase subunit b 2 (183 aa).

The helical transmembrane segment at 27–47 (PSFYAFLALLIFFGLLLHMGV) threads the bilayer.

Belongs to the ATPase B chain family. F-type ATPases have 2 components, F(1) - the catalytic core - and F(0) - the membrane proton channel. F(1) has five subunits: alpha(3), beta(3), gamma(1), delta(1), epsilon(1). F(0) has three main subunits: a(1), b(2) and c(10-14). The alpha and beta chains form an alternating ring which encloses part of the gamma chain. F(1) is attached to F(0) by a central stalk formed by the gamma and epsilon chains, while a peripheral stalk is formed by the delta and b chains.

The protein localises to the cell inner membrane. Functionally, f(1)F(0) ATP synthase produces ATP from ADP in the presence of a proton or sodium gradient. F-type ATPases consist of two structural domains, F(1) containing the extramembraneous catalytic core and F(0) containing the membrane proton channel, linked together by a central stalk and a peripheral stalk. During catalysis, ATP synthesis in the catalytic domain of F(1) is coupled via a rotary mechanism of the central stalk subunits to proton translocation. Its function is as follows. Component of the F(0) channel, it forms part of the peripheral stalk, linking F(1) to F(0). In Maricaulis maris (strain MCS10) (Caulobacter maris), this protein is ATP synthase subunit b 2.